Consider the following 918-residue polypeptide: DNA mismatch repair protein MutS (918 aa).

An ATP-binding site is contributed by 662–669 (GPNMAGKS).

The protein belongs to the DNA mismatch repair MutS family.

This protein is involved in the repair of mismatches in DNA. It is possible that it carries out the mismatch recognition step. This protein has a weak ATPase activity. The sequence is that of DNA mismatch repair protein MutS from Sorangium cellulosum (strain So ce56) (Polyangium cellulosum (strain So ce56)).